The following is a 151-amino-acid chain: Prefoldin subunit 5 (151 aa).

Residues 15 to 35 are a coiled coil; it reads IDQLKALKEQADLEVNLLQDS.

Belongs to the prefoldin subunit alpha family. In terms of assembly, heterohexamer of two PFD-alpha type and four PFD-beta type subunits forming prefoldin co-chaperone complex. Interacts with PFD6. Binds to the DELLA protein GAI.

It is found in the cytoplasm. It localises to the nucleus. Binds specifically to cytosolic chaperonin (c-CPN) and transfers target proteins to it. Binds to nascent polypeptide chain and promotes folding in an environment in which there are many competing pathways for nonnative proteins. Together with other chaperonins, contribute to the regulation of gene expression by modulating the spliceosome function on pre-mRNA splicing post-transcriptionally by acting as a co-chaperone of Hsp90 to control levels of LSM8. Required for the biogenesis of tubulins and for subsequent microtubules (MTs) organization and dynamicity. Necessary for tolerance to NaCl salt stress. Involved in the process leading to microtubules dissociation in response to gibberellic acid (GA) probably due to the DELLA proteins-mediated translocation of the prefoldin co-chaperone complex from the cytoplasm to the nucleus. Prevents cold acclimation (e.g. 7 days at 4 degrees Celsius) in a DELLA proteins-dependent manner by promoting nuclear proteasome-mediated HY5 degradation, thus modulating the expression of several genes and reducing anthocyanin biosynthesis, but seems not involved in constitutive freezing tolerance. Contributes to the GA-dependent regulation of PIN2 trafficking at the plasma membrane, thus influencing auxin flux. This is Prefoldin subunit 5 from Arabidopsis thaliana (Mouse-ear cress).